The following is a 501-amino-acid chain: Type II methyltransferase M.BsuBI (501 aa).

It belongs to the N(4)/N(6)-methyltransferase family.

It carries out the reaction a 2'-deoxyadenosine in DNA + S-adenosyl-L-methionine = an N(6)-methyl-2'-deoxyadenosine in DNA + S-adenosyl-L-homocysteine + H(+). Functionally, a beta subtype methylase that recognizes the double-stranded sequence 5'-CTGCAG-3', methylates A-5 on both strands, and protects the DNA from cleavage by the BsuBI endonuclease. This chain is Type II methyltransferase M.BsuBI (hsdBM), found in Bacillus subtilis.